A 355-amino-acid polypeptide reads, in one-letter code: Aminopeptidase N (355 aa).

Substrate contacts are provided by residues Glu156 and 290 to 294 (GAMEN). His326 is a binding site for Zn(2+). Glu327 (proton acceptor) is an active-site residue. The Zn(2+) site is built by His330 and Glu349. Residue Glu349 coordinates substrate.

The protein belongs to the peptidase M1 family. The cofactor is Zn(2+).

The protein localises to the cytoplasm. It catalyses the reaction Release of an N-terminal amino acid, Xaa-|-Yaa- from a peptide, amide or arylamide. Xaa is preferably Ala, but may be most amino acids including Pro (slow action). When a terminal hydrophobic residue is followed by a prolyl residue, the two may be released as an intact Xaa-Pro dipeptide.. Functionally, aminopeptidase N is involved in the degradation of intracellular peptides generated by protein breakdown during normal growth as well as in response to nutrient starvation. This chain is Aminopeptidase N (pepN), found in Acetobacter pasteurianus (Acetobacter turbidans).